Consider the following 228-residue polypeptide: ATP-dependent dethiobiotin synthetase BioD (228 aa).

13 to 18 is a binding site for ATP; the sequence is DIGKTF. Mg(2+) is bound at residue threonine 17. Residue lysine 38 is part of the active site. A substrate-binding site is contributed by serine 42. ATP is bound by residues aspartate 55, 116-119, 179-180, and 208-210; these read EGSG, NK, and PKI. Positions 55 and 116 each coordinate Mg(2+).

The protein belongs to the dethiobiotin synthetase family. Homodimer. It depends on Mg(2+) as a cofactor.

It localises to the cytoplasm. It catalyses the reaction (7R,8S)-7,8-diammoniononanoate + CO2 + ATP = (4R,5S)-dethiobiotin + ADP + phosphate + 3 H(+). It functions in the pathway cofactor biosynthesis; biotin biosynthesis; biotin from 7,8-diaminononanoate: step 1/2. Functionally, catalyzes a mechanistically unusual reaction, the ATP-dependent insertion of CO2 between the N7 and N8 nitrogen atoms of 7,8-diaminopelargonic acid (DAPA, also called 7,8-diammoniononanoate) to form a ureido ring. The protein is ATP-dependent dethiobiotin synthetase BioD of Clostridium perfringens (strain ATCC 13124 / DSM 756 / JCM 1290 / NCIMB 6125 / NCTC 8237 / Type A).